We begin with the raw amino-acid sequence, 365 residues long: Succinyl-diaminopimelate desuccinylase (365 aa).

His-64 provides a ligand contact to Zn(2+). Asp-66 is an active-site residue. Residue Asp-95 participates in Zn(2+) binding. The active-site Proton acceptor is Glu-125. Zn(2+)-binding residues include Glu-126, Glu-154, and His-339.

The protein belongs to the peptidase M20A family. DapE subfamily. Homodimer. The cofactor is Zn(2+). It depends on Co(2+) as a cofactor.

The enzyme catalyses N-succinyl-(2S,6S)-2,6-diaminopimelate + H2O = (2S,6S)-2,6-diaminopimelate + succinate. It functions in the pathway amino-acid biosynthesis; L-lysine biosynthesis via DAP pathway; LL-2,6-diaminopimelate from (S)-tetrahydrodipicolinate (succinylase route): step 3/3. Catalyzes the hydrolysis of N-succinyl-L,L-diaminopimelic acid (SDAP), forming succinate and LL-2,6-diaminopimelate (DAP), an intermediate involved in the bacterial biosynthesis of lysine and meso-diaminopimelic acid, an essential component of bacterial cell walls. This chain is Succinyl-diaminopimelate desuccinylase, found in Sulfurimonas denitrificans (strain ATCC 33889 / DSM 1251) (Thiomicrospira denitrificans (strain ATCC 33889 / DSM 1251)).